Reading from the N-terminus, the 285-residue chain is Urease accessory protein UreD (285 aa).

Belongs to the UreD family. As to quaternary structure, ureD, UreF and UreG form a complex that acts as a GTP-hydrolysis-dependent molecular chaperone, activating the urease apoprotein by helping to assemble the nickel containing metallocenter of UreC. The UreE protein probably delivers the nickel.

Its subcellular location is the cytoplasm. Its function is as follows. Required for maturation of urease via the functional incorporation of the urease nickel metallocenter. In Azoarcus sp. (strain BH72), this protein is Urease accessory protein UreD.